Consider the following 325-residue polypeptide: GMP reductase (325 aa).

Cys174 acts as the Thioimidate intermediate in catalysis. NADP(+) is bound at residue 203 to 226 (IIADGGIRTNGDIAKSIRFGANMV).

The protein belongs to the IMPDH/GMPR family. GuaC type 2 subfamily.

It catalyses the reaction IMP + NH4(+) + NADP(+) = GMP + NADPH + 2 H(+). Catalyzes the irreversible NADPH-dependent deamination of GMP to IMP. It functions in the conversion of nucleobase, nucleoside and nucleotide derivatives of G to A nucleotides, and in maintaining the intracellular balance of A and G nucleotides. In Latilactobacillus sakei subsp. sakei (strain 23K) (Lactobacillus sakei subsp. sakei), this protein is GMP reductase.